The chain runs to 348 residues: Dihydroorotase (348 aa).

Residues His-14 and His-16 each coordinate Zn(2+). Residues 16-18 (HLR) and Asn-42 contribute to the substrate site. Residues Lys-100, His-137, and His-175 each contribute to the Zn(2+) site. Lys-100 is modified (N6-carboxylysine). His-137 contributes to the substrate binding site. Leu-220 is a binding site for substrate. Residue Asp-248 coordinates Zn(2+). The active site involves Asp-248. Residues His-252 and Ala-264 each coordinate substrate.

Belongs to the metallo-dependent hydrolases superfamily. DHOase family. Class II DHOase subfamily. As to quaternary structure, homodimer. The cofactor is Zn(2+).

The catalysed reaction is (S)-dihydroorotate + H2O = N-carbamoyl-L-aspartate + H(+). Its pathway is pyrimidine metabolism; UMP biosynthesis via de novo pathway; (S)-dihydroorotate from bicarbonate: step 3/3. Functionally, catalyzes the reversible cyclization of carbamoyl aspartate to dihydroorotate. In Pseudomonas paraeruginosa (strain DSM 24068 / PA7) (Pseudomonas aeruginosa (strain PA7)), this protein is Dihydroorotase.